The primary structure comprises 1968 residues: Signal element on autosome protein 2 (1968 aa).

A compositionally biased stretch (low complexity) spans 72–88; that stretch reads TSSSFSSSLATTTTTSS. Disordered stretches follow at residues 72–252 and 271–364; these read TSSS…TPTQ and QVQQ…VQEQ. Residues 107–119 show a composition bias toward basic residues; the sequence is SHHHPSSSHHHHP. Low complexity-rich tracts occupy residues 120-134, 144-165, 219-232, and 298-338; these read GQQQSSSSSSSSHLQ, HPYYHQQQPQHQHQQAQQYGQA, DQPSSSTGSSLPPL, and LSSI…SSSS. Over residues 346–362 the composition is skewed to polar residues; sequence PNASSSSLIKRQSQDVQ. The segment at 413–440 adopts a C2H2-type 1 zinc-finger fold; that stretch reads YQCPNCNRNLANARNLQRHRQTCGSAQH. 2 disordered regions span residues 451 to 499 and 538 to 601; these read RSPP…LYSP and WSRD…TLDP. The segment covering 452-467 has biased composition (pro residues); sequence SPPPCASAPPVAPPTA. Residues 472–482 are compositionally biased toward polar residues; the sequence is FQHHNSTGNLT. The segment covering 483–498 has biased composition (low complexity); that stretch reads LSYSSSSSRHQSSLYS. The span at 570–594 shows a compositional bias: basic and acidic residues; the sequence is PLHHLDSFDSADHRKETPRECHEPD. The C2H2-type 2; degenerate zinc-finger motif lies at 651–672; it reads FTCEACKKSVSSERSLRRHYNT. Disordered stretches follow at residues 681 to 712 and 785 to 854; these read AASGEERPPTTKRKPATKRPSKKKEASEGPEK and VTSA…TGNP. Over residues 690–702 the composition is skewed to basic residues; that stretch reads TTKRKPATKRPSK. Positions 794-804 are enriched in low complexity; it reads HQLPHQQPQQQ. The segment covering 812-824 has biased composition (acidic residues); the sequence is LLNEQDESADDDG. The span at 827–851 shows a compositional bias: low complexity; it reads RSSSGTVSNSTTTTTTATTTSSKST. A C2H2-type 3; degenerate zinc finger spans residues 856–875; it reads FTCEHCARQLCSMSNLKRHR. 4 disordered regions span residues 882 to 905, 975 to 1069, 1083 to 1227, and 1246 to 1273; these read ASSSSNSAASRPPSQPSTPATAPA, GDAL…EHKN, RMDA…SPLD, and PGPLEQGQSSVDSQSTAEPSPRKASQQA. Low complexity-rich tracts occupy residues 981 to 1015, 1023 to 1046, and 1108 to 1131; these read QQHQQKMDQQIQIQFQQQQQQRFQHHQQQQQAGRI, ILNQVQNPPQQVQHNQHQNQMLNP, and PQRSQAPAPSRQQQQQPPVAYQVQ. The segment covering 1136 to 1146 has biased composition (pro residues); it reads PLPPMQLPPLQ. Residues 1147–1185 show a composition bias toward low complexity; sequence NPHNQQQQHQMLHQSQMNYQQVQQVQQVQHVQQQQNLQN. Polar residues-rich tracts occupy residues 1201 to 1211 and 1251 to 1273; these read APGNRSRSHSN and QGQSSVDSQSTAEPSPRKASQQA. The C2H2-type 4 zinc-finger motif lies at 1274 to 1297; sequence YICPECKKTYASRKNVKRHRMAVH. 4 disordered regions span residues 1333-1478, 1569-1608, 1624-1671, and 1769-1822; these read TPDS…ADEE, SVGLPSLASPGEQFGYQQYSQHPQQHPQQHPQQHPQQQQQ, HPPM…LTCS, and ADRQ…PSTN. Residues 1388-1403 show a composition bias toward basic and acidic residues; sequence ERQEPPKKPVADDHKS. Pro residues-rich tracts occupy residues 1407–1421 and 1429–1445; these read PLPPANTIMPPPPPY and LNPPRTALPPLQLPPLQ. Residues 1589–1608 are compositionally biased toward low complexity; the sequence is QHPQQHPQQHPQQHPQQQQQ. Residues 1624-1633 are compositionally biased toward polar residues; sequence HPPMPVSQQF. The segment at 1668–1694 adopts a C2H2-type 5; degenerate zinc-finger fold; the sequence is LTCSGCKKILGSDYSLRRHRAGCADVQ. Residues 1800-1811 show a composition bias toward low complexity; it reads SSSSSSSTSSAS. A C2H2-type 6 zinc finger spans residues 1826–1858; that stretch reads HYCQFPECGKNFSSEWNLARHTRESCKMTTRAH.

In terms of tissue distribution, expressed in seam cells, intestine cells, pharyngeal muscles and nerve ring neurons.

Its subcellular location is the nucleus. The protein resides in the cytoplasm. Functionally, RNA-binding protein, which regulates the expression of proteins required to control developmental timing of events during the L2 to L3 larval stage switch. Binds to the 3'UTR of the transcript of the heterochronic protein lin-28 to post-transcriptionally negatively regulate its expression in certain tissue types in the later larval stages. During larval development, controls the timing of seam cell division and terminal differentiation into adult alae. In vitro, it can also bind to DNA through its first zinc finger. May bind directly or indirectly to the promoter of the sex-determining factor xol-1 to activate its transcription. Its activation of xol-1 transcription controls sex determination and X chromosome dosage compensation to promote male development. Through the negative regulation of lin-28 transcript, it also has a role in the fox-1-sex-1-mediated determination of sexual fate. Acts in the intestine to play a role in regulating adult lifespan. In Caenorhabditis elegans, this protein is Signal element on autosome protein 2.